The chain runs to 386 residues: 26S proteasome non-ATPase regulatory subunit 13 homolog B (386 aa).

A2 is subject to N-acetylalanine. One can recognise a PCI domain in the interval 174–347; sequence FSEFYKNALL…GTVYVSWAQP (174 aa).

Belongs to the proteasome subunit S11 family. In terms of assembly, component of the 19S regulatory particle (RP/PA700) lid subcomplex of the 26S proteasome. The 26S proteasome is composed of a core protease (CP), known as the 20S proteasome, capped at one or both ends by the 19S regulatory particle (RP/PA700). The RP/PA700 complex is composed of at least 17 different subunits in two subcomplexes, the base and the lid, which form the portions proximal and distal to the 20S proteolytic core, respectively. Ubiquitous with highest expression in flowers.

Its function is as follows. Acts as a regulatory subunit of the 26S proteasome which is involved in the ATP-dependent degradation of ubiquitinated proteins. The chain is 26S proteasome non-ATPase regulatory subunit 13 homolog B (RPN9B) from Arabidopsis thaliana (Mouse-ear cress).